The sequence spans 175 residues: dATP triphosphohydrolase (175 aa).

Residue R19 coordinates dATP. Co(2+)-binding residues include H34, H66, D67, E70, D75, and D119.

It belongs to the Caudovirales dATP triphosphohydrolase family. As to quaternary structure, homohexamer. It depends on Co(2+) as a cofactor. Zn(2+) serves as cofactor.

It carries out the reaction dATP + H2O = 2'-deoxyadenosine + triphosphate + H(+). The enzyme catalyses dADP + H2O = 2'-deoxyadenosine + diphosphate. The catalysed reaction is dAMP + H2O = 2'-deoxyadenosine + phosphate. Catalyzes the hydrolysis of dATP, dADP and dAMP into dA. This step is essential for Z-genome synthesis (containing aminoadenine instead of adenine). Specifically removes dATP and its precursor dADP from the nucleotide pool of the host, preventing the incorporation of A into the phage genome and favoring the integration of the Z-base into the viral genome. This Cyanophage S-2L (Cyanobacteria phage S-2L) protein is dATP triphosphohydrolase (datZ).